Reading from the N-terminus, the 416-residue chain is Phosphoribosylamine--glycine ligase (416 aa).

The region spanning 105 to 310 (KSFLKKYRIK…PLELILAATQ (206 aa)) is the ATP-grasp domain. Residue 131–192 (IYSLTPPIVV…EEFLDGYELS (62 aa)) coordinates ATP. Residues E281 and N283 each coordinate Mg(2+).

This sequence belongs to the GARS family. The cofactor is Mg(2+). Requires Mn(2+) as cofactor.

The catalysed reaction is 5-phospho-beta-D-ribosylamine + glycine + ATP = N(1)-(5-phospho-beta-D-ribosyl)glycinamide + ADP + phosphate + H(+). It participates in purine metabolism; IMP biosynthesis via de novo pathway; N(1)-(5-phospho-D-ribosyl)glycinamide from 5-phospho-alpha-D-ribose 1-diphosphate: step 2/2. This Campylobacter jejuni subsp. jejuni serotype O:2 (strain ATCC 700819 / NCTC 11168) protein is Phosphoribosylamine--glycine ligase.